The sequence spans 430 residues: MGGKDYEFGGPIGTGVLMLILPPISHYLHFLITPRGAPPPEFWSAPLETLKSVTPTFSSLFSLHATLAVAAYYLLLVALMYVLPAEIAEGVVLKDGSRLKYRCNAFTTFLVFFTFLGTMTVLEGPTWWFWSYLTDNFAQLQSASIVFSYAMSLWVYIRSYRPMPKGKEVILSPVGFKGNHIHDFWMGRELNPRIGEWLDIKQLHELRPGLMGWILFNLAWTVKQYNTHGFVSDSIVLVNLFETWYVVDALWNESKVLTTMDITTDGLGVMLLFGNAVWVPFMYCLQARYLASFPVHLGLLGIAGVLAVQFTGYAIFRGANNQKNAFRTNPADPAVSHLKFMTTKSGSKLLISGWWGVARHVNYFGDWIMAWSYCLTTGFNTPLTYFYVIYFGILLLHRDRRDEAKCREKYGKDWDRYCKVVKWRIIPGIY.

The next 6 helical transmembrane spans lie at 12-32, 67-87, 109-129, 230-250, 267-287, and 290-310; these read IGTG…HFLI, LAVA…PAEI, FLVF…TWWF, FVSD…VDAL, LGVM…CLQA, and LASF…AVQF. Residues Lys323, Arg327, Leu350, Trp355, and 362 to 363 each bind NADP(+); that span reads NY. Transmembrane regions (helical) follow at residues 349-369 and 376-396; these read LLIS…DWIM and TTGF…ILLL. NADP(+) is bound by residues Asp402, 406–410, and Tyr417; that span reads CREKY.

This sequence belongs to the ERG4/ERG24 family.

The protein resides in the membrane. It catalyses the reaction 4,4-dimethyl-5alpha-cholesta-8,24-dien-3beta-ol + NADP(+) = 4,4-dimethyl-5alpha-cholesta-8,14,24-trien-3beta-ol + NADPH + H(+). Its pathway is steroid biosynthesis; zymosterol biosynthesis; zymosterol from lanosterol: step 2/6. Its function is as follows. Reduces the C14=C15 double bond of 4,4-dimethyl-cholesta-8,14,24-trienol to produce 4,4-dimethyl-cholesta-8,24-dienol. The polypeptide is Delta(14)-sterol reductase (ERG3) (Ascobolus immersus).